We begin with the raw amino-acid sequence, 324 residues long: Olfactory receptor 11H4 (324 aa).

The Extracellular portion of the chain corresponds to 1–35 (MSFFFVDLRPMNRSATHIVTEFILLGFPGCWKIQI). N-linked (GlcNAc...) asparagine glycosylation occurs at Asn-12. A helical transmembrane segment spans residues 36-56 (FLFSLFLVIYVLTLLGNGAII). Over 57–64 (YAVRCNPL) the chain is Cytoplasmic. Residues 65–85 (LHTPMYFLLGNFAFLEIWYVS) traverse the membrane as a helical segment. Topologically, residues 86-109 (STIPNMLVNILSKTKAISFSGCFL) are extracellular. Residues Cys-107 and Cys-199 are joined by a disulfide bond. A helical transmembrane segment spans residues 110-130 (QFYFFFSLGTTECLFLAVMAY). Over 131–149 (DRYLAICHPLQYPAIMTVR) the chain is Cytoplasmic. The helical transmembrane segment at 150-170 (FCGKLVSFCWLIGFLGYPIPI) threads the bilayer. Over 171–207 (FYISQLPFCGPNIIDHFLCDMDPLMALSCAPAPITEC) the chain is Extracellular. Residues 208-227 (IFYTQSSLVLFFTSMYILRS) traverse the membrane as a helical segment. The Cytoplasmic portion of the chain corresponds to 228-247 (YILLLTAVFQVPSAAGRRKA). A helical membrane pass occupies residues 248-268 (FSTCGSHLVVVSLFYGTVMVM). At 269–281 (YVSPTYGIPTLLQ) the chain is on the extracellular side. The helical transmembrane segment at 282–302 (KILTLVYSVTTPLFNPLIYTL) threads the bilayer. Residues 303–324 (RNKDMKLALRNVLFGMRIRQNS) are Cytoplasmic-facing.

The protein belongs to the G-protein coupled receptor 1 family.

The protein resides in the cell membrane. Functionally, odorant receptor. This Homo sapiens (Human) protein is Olfactory receptor 11H4 (OR11H4).